Consider the following 438-residue polypeptide: Metacaspase-1B (438 aa).

Residues 1-125 form a disordered region; that stretch reads MYYHHSHQGW…SQHFGRGAPS (125 aa). The span at 29-38 shows a compositional bias: low complexity; it reads PYPYSSNAQY. Pro residues predominate over residues 39–74; the sequence is QPPPGPPPTSHYAPPPGPPPSHYYPPPGSYPSPAPS. Residues His-222 and Cys-278 contribute to the active site.

It belongs to the peptidase C14B family.

Its function is as follows. Involved in cell death (apoptosis). The protein is Metacaspase-1B (casB) of Aspergillus niger (strain ATCC MYA-4892 / CBS 513.88 / FGSC A1513).